We begin with the raw amino-acid sequence, 217 residues long: Pre-mRNA-splicing factor sap62 (217 aa).

The Matrin-type zinc finger occupies 54 to 84; sequence FECRLCLTTHANENSYLTHTQGKKHQTNLAR.

This sequence belongs to the SF3A2 family. Belongs to the 40S cdc5-associated complex (or cwf complex), a spliceosome sub-complex reminiscent of a late-stage spliceosome composed of the U2, U5 and U6 snRNAs and at least brr2, cdc5, cwf2/prp3, cwf3/syf1, cwf4/syf3, cwf5/ecm2, spp42/cwf6, cwf7/spf27, cwf8, cwf9, cwf10, cwf11, cwf12, prp45/cwf13, cwf14, cwf15, cwf16, cwf17, cwf18, cwf19, cwf20, cwf21, cwf22, cwf23, cwf24, cwf25, cwf26, cyp7/cwf27, cwf28, cwf29/ist3, lea1, msl1, prp5/cwf1, prp10, prp12/sap130, prp17, prp22, sap61, sap62, sap114, sap145, slu7, smb1, smd1, smd3, smf1, smg1 and syf2.

It is found in the nucleus. It localises to the cytoplasm. Involved in mRNA splicing where it associates with cdc5 and the other cwf proteins as part of the spliceosome. The protein is Pre-mRNA-splicing factor sap62 (sap62) of Schizosaccharomyces pombe (strain 972 / ATCC 24843) (Fission yeast).